Here is a 264-residue protein sequence, read N- to C-terminus: AA9 family lytic polysaccharide monooxygenase A (264 aa).

An N-terminal signal peptide occupies residues M1–A18. H19 is a binding site for Cu(2+). N-linked (GlcNAc...) asparagine glycosylation is found at N51 and N75. An intrachain disulfide couples C59 to C182. H96 contacts Cu(2+). N110 is a glycosylation site (N-linked (GlcNAc...) asparagine). H162 is a binding site for O2. Y179 lines the Cu(2+) pocket. 2 N-linked (GlcNAc...) asparagine glycosylation sites follow: N218 and N251.

Belongs to the polysaccharide monooxygenase AA9 family. Requires Cu(2+) as cofactor.

It localises to the secreted. It carries out the reaction [(1-&gt;4)-beta-D-glucosyl]n+m + reduced acceptor + O2 = 4-dehydro-beta-D-glucosyl-[(1-&gt;4)-beta-D-glucosyl]n-1 + [(1-&gt;4)-beta-D-glucosyl]m + acceptor + H2O.. Its function is as follows. Lytic polysaccharide monooxygenase (LPMO) that depolymerizes crystalline and amorphous polysaccharides via the oxidation of scissile alpha- or beta-(1-4)-glycosidic bonds, yielding C4 oxidation products. Catalysis by LPMOs requires the reduction of the active-site copper from Cu(II) to Cu(I) by a reducing agent and H(2)O(2) or O(2) as a cosubstrate. Active on cellulose and cello-oligosaccharides, as well as plant cell wall-derived hemicellulosic polysaccharides. Also active on cello-oligosaccharides such as cellohexaose, cellopentaose or cellotetraose. This Phanerochaete carnosa (strain HHB-10118-sp) (White-rot fungus) protein is AA9 family lytic polysaccharide monooxygenase A.